Consider the following 63-residue polypeptide: Small ribosomal subunit protein eS27 (63 aa).

C18, C21, C37, and C40 together coordinate Zn(2+). The segment at 18 to 40 (CLDCGNQQVVFDRAASYVQCIIC) adopts a C4-type zinc-finger fold.

Belongs to the eukaryotic ribosomal protein eS27 family. In terms of assembly, part of the 30S ribosomal subunit. Zn(2+) is required as a cofactor.

This chain is Small ribosomal subunit protein eS27, found in Methanothermobacter thermautotrophicus (strain ATCC 29096 / DSM 1053 / JCM 10044 / NBRC 100330 / Delta H) (Methanobacterium thermoautotrophicum).